A 122-amino-acid polypeptide reads, in one-letter code: Large ribosomal subunit protein uL14 (122 aa).

The protein belongs to the universal ribosomal protein uL14 family. Part of the 50S ribosomal subunit. Forms a cluster with proteins L3 and L19. In the 70S ribosome, L14 and L19 interact and together make contacts with the 16S rRNA in bridges B5 and B8.

Its function is as follows. Binds to 23S rRNA. Forms part of two intersubunit bridges in the 70S ribosome. In Kosmotoga olearia (strain ATCC BAA-1733 / DSM 21960 / TBF 19.5.1), this protein is Large ribosomal subunit protein uL14.